A 728-amino-acid chain; its full sequence is Catalase-peroxidase (728 aa).

Positions 91–218 form a cross-link, tryptophyl-tyrosyl-methioninium (Trp-Tyr) (with M-244); the sequence is WHSAGTYRTA…LAAVQMGLIY (128 aa). Residue H92 is the Proton acceptor of the active site. Residues 218–244 constitute a cross-link (tryptophyl-tyrosyl-methioninium (Tyr-Met) (with W-91)); that stretch reads YVNPEGPDGNPDPVAAARDIRDTFARM. H259 is a binding site for heme b.

Belongs to the peroxidase family. Peroxidase/catalase subfamily. In terms of assembly, homodimer or homotetramer. It depends on heme b as a cofactor. Formation of the three residue Trp-Tyr-Met cross-link is important for the catalase, but not the peroxidase activity of the enzyme.

It catalyses the reaction H2O2 + AH2 = A + 2 H2O. The catalysed reaction is 2 H2O2 = O2 + 2 H2O. In terms of biological role, bifunctional enzyme with both catalase and broad-spectrum peroxidase activity. The polypeptide is Catalase-peroxidase (Burkholderia pseudomallei (strain 1710b)).